The sequence spans 311 residues: NEDD4 family-interacting protein 2 (311 aa).

The disordered stretch occupies residues 1-133; the sequence is RRSASDAELS…PPYSSITVEA (133 aa). Topologically, residues 1-206 are cytoplasmic; sequence RRSASDAELS…VEQLRVGNDG (206 aa). Positions 7–22 are enriched in low complexity; the sequence is AELSAGAEGATGSEAA. The segment covering 26-37 has biased composition (gly residues); it reads DLGGRTRGGGRG. The segment covering 38-47 has biased composition (low complexity); that stretch reads SAAAAATTST. Basic and acidic residues predominate over residues 48–75; it reads REAEGAERRGDTPARKPDPEAGRMDHHQ. The span at 92–101 shows a compositional bias: polar residues; that stretch reads ESSAVEQPST. Over residues 102 to 120 the composition is skewed to low complexity; it reads SSLAAPTVEAAASAPALDP. Positions 123-126 are interaction with NEDD4; sequence PPPY. The PPxY motif 1 motif lies at 123–126; sequence PPPY. Phosphotyrosine; by SRC occurs at positions 126, 142, 146, and 152. Short sequence motifs (PPxY motif) lie at residues 149-152 and 159-161; these read PPPY and PTY. The helical transmembrane segment at 207–227 threads the bilayer; sequence IFMLAFFMAFIFNWLGFCLSF. Topologically, residues 228–232 are extracellular; that stretch reads CITNT. The chain crosses the membrane as a helical span at residues 233–253; the sequence is IAGRYGAICGFGLSLIKWILI. The Cytoplasmic segment spans residues 254–262; it reads VRFSDYFTG. Residues 263–283 traverse the membrane as a helical segment; it reads YFNGQYWLWWIFLVLGLLLFF. Residues 284–311 are Extracellular-facing; that stretch reads RGFVNYLKVRNMSESMAAAHRTRYFFLL.

In terms of assembly, forms heterodimers with NDFIP1. Interacts with HECT domain-containing E3 ubiquitin-protein ligases, including NEDD4. Interacts with NEDD4L. When phosphorylated at Tyr-142, interacts with SRC and LYN SH2 domain. May thus act as a scaffold that recruits SRC to NDFIP1, enhancing NDFIP1 phosphorylation. Interacts with SLC11A2/DMT1. May interact with phosphorylated EGFR. Interacts with KCNH2. Post-translationally, ubiquitinated by NEDD4 and NEDD4L; which does not affect turnover. Also ubiquitinated by ITCH. In terms of processing, undergoes transient tyrosine-phosphorylation following EGF stimulation, most probably catalyzed by SRC. Phosphorylation on Tyr-126, Tyr-146 and Tyr-152 are dependent on the phosphorylation on Tyr-142. Also phosphorylated by LYN and FYN. As to expression, ubiquitously expressed, with highest levels in brain, liver, kidney and testis.

The protein resides in the endosome membrane. It is found in the golgi apparatus membrane. It localises to the endosome. The protein localises to the multivesicular body membrane. Its function is as follows. Activates HECT domain-containing E3 ubiquitin-protein ligases, including ITCH, NEDD4, NEDD4L, SMURF2, WWP1 and WWP2, and consequently modulates the stability of their targets. As a result, may control many cellular processes. Recruits ITCH, NEDD4 and SMURF2 to endosomal membranes. Negatively regulates KCNH2 potassium channel activity by decreasing its cell-surface expression and interfering with channel maturation through recruitment of NEDD4L to the Golgi apparatus and multivesicular body where it mediates KCNH2 degradation. May modulate EGFR signaling. Together with NDFIP1, limits the cytokine signaling and expansion of effector Th2 T-cells by promoting degradation of JAK1, probably by ITCH- and NEDD4L-mediated ubiquitination. The polypeptide is NEDD4 family-interacting protein 2 (Ndfip2) (Mus musculus (Mouse)).